Here is a 286-residue protein sequence, read N- to C-terminus: Acetyl-coenzyme A carboxylase carboxyl transferase subunit beta (286 aa).

One can recognise a CoA carboxyltransferase N-terminal domain in the interval 26 to 286 (LWEKCVKCDA…LAKFTRRAAV (261 aa)). Zn(2+) contacts are provided by Cys30, Cys33, Cys49, and Cys52. The C4-type zinc finger occupies 30 to 52 (CVKCDAVLYKPELEKNLDVCPKC).

Belongs to the AccD/PCCB family. In terms of assembly, acetyl-CoA carboxylase is a heterohexamer composed of biotin carboxyl carrier protein (AccB), biotin carboxylase (AccC) and two subunits each of ACCase subunit alpha (AccA) and ACCase subunit beta (AccD). Zn(2+) is required as a cofactor.

The protein resides in the cytoplasm. The enzyme catalyses N(6)-carboxybiotinyl-L-lysyl-[protein] + acetyl-CoA = N(6)-biotinyl-L-lysyl-[protein] + malonyl-CoA. The protein operates within lipid metabolism; malonyl-CoA biosynthesis; malonyl-CoA from acetyl-CoA: step 1/1. Functionally, component of the acetyl coenzyme A carboxylase (ACC) complex. Biotin carboxylase (BC) catalyzes the carboxylation of biotin on its carrier protein (BCCP) and then the CO(2) group is transferred by the transcarboxylase to acetyl-CoA to form malonyl-CoA. The polypeptide is Acetyl-coenzyme A carboxylase carboxyl transferase subunit beta (Cellvibrio japonicus (strain Ueda107) (Pseudomonas fluorescens subsp. cellulosa)).